A 345-amino-acid chain; its full sequence is Nuclear distribution protein nudE-like 1 (345 aa).

A coiled-coil region spans residues 28 to 190 (QSFQEARDEL…LAVRERQQEV (163 aa)). The self-association stretch occupies residues 56 to 166 (VQAEQRNRDL…LDEKESLLVS (111 aa)). The interaction with KATNB1 stretch occupies residues 64 to 189 (DLQADNQRLK…ELAVRERQQE (126 aa)). The segment at 114–133 (YVRELEQANDDLERAKRATI) is required for interaction with PAFAH1B1. The segment at 175–345 (RDLRQELAVR…SAPGMLPLSV (171 aa)) is interaction with CENPF. Positions 189–256 (EVTRKSAPSS…SARISALNIV (68 aa)) are interaction with YWHAE. The tract at residues 191–345 (TRKSAPSSPT…SAPGMLPLSV (155 aa)) is interaction with NEFL. Residues 195-256 (APSSPTLDCE…SARISALNIV (62 aa)) are interaction with KATNA1. Residue Ser-215 is modified to Phosphoserine. The segment at 217 to 240 (PATPVGKGTENSFPSPKAIPNGFG) is disordered. Thr-219 is modified (phosphothreonine). Position 231 is a phosphoserine (Ser-231). The interval 241–280 (TSPLTPSARISALNIVGDLLRKVGALESKLAACRNFAKDQ) is interaction with DISC1. A Phosphoserine; by CDK1 modification is found at Ser-242. Thr-245 carries the phosphothreonine; by CDK1 and MAPK1 modification. Residues 256-291 (VGDLLRKVGALESKLAACRNFAKDQASRKSYVPGSV) are required for localization to the centrosome and interaction with dynein, dynactin, tubulin gamma, PCM1 and PCNT. Residue Cys-273 is the site of S-palmitoyl cysteine; by ZDHHC2, ZDHHC3 and ZDHHC7 attachment. The interval 314–345 (KGAVNGFDPAPPPPGLGSSRPSSAPGMLPLSV) is disordered. Low complexity predominate over residues 329–339 (LGSSRPSSAPG). The residue at position 344 (Ser-344) is a Phosphoserine.

Belongs to the nudE family. In terms of assembly, interacts with PLEKHM1 (via N- and C-terminus). Interacts with dynactin, PCM1 and PCNT. Interacts (via C-terminus) with CENPF. Self-associates. Interacts with DISC1, dynein, tubulin gamma, KATNA1, KATNB1, microtubules, PAFAHB1 and YWHAE. Interacts directly with NEFL and indirectly with NEFH. Interacts with ZNF365. Interacts with GTP-bound RAB9A; the interaction may lead to RAB9A-dynein motor tethering. In terms of processing, phosphorylated by CDK1 and MAPK1. Phosphorylated in mitosis. Phosphorylated by CDK5. Phosphorylation by CDK5 promotes interaction with KATNA1 and YWHAE. Post-translationally, palmitoylation at Cys-273 reduces affinity for dynein. In terms of tissue distribution, expressed in brain, liver, lung and testis (at protein level). Expressed in brain, epididymis, eye, heart, kidney, large intestine, liver, ovary, pancreas, prostate, skeletal muscle, smooth muscle, spleen, submaxillary gland, testis, thymus and thyroid. Within the brain expression is pronounced in the cortex, hippocampus, olfactory bulb, striatum, thalamic and hypothalamic structures and in the molecular layer of the cerebellum. Largely excluded from cortical progenitor cells which express NDE1.

It is found in the cytoplasm. It localises to the cytoskeleton. Its subcellular location is the microtubule organizing center. The protein localises to the centrosome. The protein resides in the chromosome. It is found in the centromere. It localises to the kinetochore. Its subcellular location is the spindle. In terms of biological role, required for organization of the cellular microtubule array and microtubule anchoring at the centrosome. May regulate microtubule organization at least in part by targeting the microtubule severing protein KATNA1 to the centrosome. Also positively regulates the activity of the minus-end directed microtubule motor protein dynein. May enhance dynein-mediated microtubule sliding by targeting dynein to the microtubule plus ends. Required for several dynein- and microtubule-dependent processes such as the maintenance of Golgi integrity, the centripetal motion of secretory vesicles and the coupling of the nucleus and centrosome. Also required during brain development for the migration of newly formed neurons from the ventricular/subventricular zone toward the cortical plate. Plays a role, together with DISC1, in the regulation of neurite outgrowth. Required for mitosis in some cell types but appears to be dispensible for mitosis in cortical neuronal progenitors, which instead requires NDE1. Facilitates the polymerization of neurofilaments from the individual subunits NEFH and NEFL. Positively regulates lysosome peripheral distribution and ruffled border formation in osteoclasts. Plays a role, together with DISC1, in the regulation of neurite outgrowth. May act as a RAB9A/B effector that tethers RAB9-associated late endosomes to the dynein motor for their retrograde transport to the trans-Golgi network. In Mus musculus (Mouse), this protein is Nuclear distribution protein nudE-like 1.